A 104-amino-acid polypeptide reads, in one-letter code: Thioredoxin (104 aa).

Residues 2–104 form the Thioredoxin domain; it reads KQVSDASFEE…KLFEWVEASV (103 aa). A disulfide bridge connects residues Cys29 and Cys32.

This sequence belongs to the thioredoxin family.

Participates in various redox reactions through the reversible oxidation of its active center dithiol to a disulfide and catalyzes dithiol-disulfide exchange reactions. The sequence is that of Thioredoxin (trxA) from Rhodospirillum rubrum.